The following is a 405-amino-acid chain: Adenosylhomocysteinase (405 aa).

Asp-113 and Glu-138 together coordinate substrate. NAD(+) is bound at residue 139–141 (TTT). Positions 168 and 172 each coordinate substrate. Residues Asn-173, 202–207 (GYGWCG), Glu-225, Asn-260, 281–283 (AGH), and Asn-327 contribute to the NAD(+) site.

This sequence belongs to the adenosylhomocysteinase family. NAD(+) is required as a cofactor.

It localises to the cytoplasm. The catalysed reaction is S-adenosyl-L-homocysteine + H2O = L-homocysteine + adenosine. It participates in amino-acid biosynthesis; L-homocysteine biosynthesis; L-homocysteine from S-adenosyl-L-homocysteine: step 1/1. May play a key role in the regulation of the intracellular concentration of adenosylhomocysteine. In Archaeoglobus fulgidus (strain ATCC 49558 / DSM 4304 / JCM 9628 / NBRC 100126 / VC-16), this protein is Adenosylhomocysteinase.